Consider the following 707-residue polypeptide: Polyribonucleotide nucleotidyltransferase (707 aa).

2 residues coordinate Mg(2+): D484 and D490. The KH domain maps to 551-610 (PRVVRMVVNPEKIRDIIGPAGKTITKIISETGVKIDIEEDGRLYITAPNLEAGERAKQMI). The S1 motif domain maps to 620 to 688 (GGIYLGKVLR…KLGRIVLSRK (69 aa)). The tract at residues 688–707 (KDAMPDEEESDNRKSDNRKK) is disordered. Residues 698–707 (DNRKSDNRKK) show a composition bias toward basic and acidic residues.

It belongs to the polyribonucleotide nucleotidyltransferase family. It depends on Mg(2+) as a cofactor.

The protein localises to the cytoplasm. The enzyme catalyses RNA(n+1) + phosphate = RNA(n) + a ribonucleoside 5'-diphosphate. In terms of biological role, involved in mRNA degradation. Catalyzes the phosphorolysis of single-stranded polyribonucleotides processively in the 3'- to 5'-direction. The chain is Polyribonucleotide nucleotidyltransferase from Caldanaerobacter subterraneus subsp. tengcongensis (strain DSM 15242 / JCM 11007 / NBRC 100824 / MB4) (Thermoanaerobacter tengcongensis).